Consider the following 164-residue polypeptide: UPF0225 protein Shewmr7_1921 (164 aa).

The protein belongs to the UPF0225 family.

This chain is UPF0225 protein Shewmr7_1921, found in Shewanella sp. (strain MR-7).